The chain runs to 161 residues: TM2 domain-containing protein DDB_G0278163 (161 aa).

The Cytoplasmic portion of the chain corresponds to 1 to 24; sequence MGHHHHHHGGSGHHHHHHHHGSGH. Residues 25-45 traverse the membrane as a helical segment; that stretch reads YGGGAVLVTPIVTPVPVVYGS. Residues 46-54 lie on the Extracellular side of the membrane; it reads RSSSYCPKS. One can recognise a TM2 domain in the interval 52 to 100; it reads PKSMTVAYVLWFFFGILGFHRLYLGRVGTFFLYFFTAGVFGLGWLFDAF. A helical transmembrane segment spans residues 55 to 75; sequence MTVAYVLWFFFGILGFHRLYL. Over 76-80 the chain is Cytoplasmic; that stretch reads GRVGT. A helical transmembrane segment spans residues 81 to 101; it reads FFLYFFTAGVFGLGWLFDAFY. Topologically, residues 102–161 are extracellular; that stretch reads THKMVKHYNECEFTKSCVGQSPPATIPIYQSEGAYPTYQQVPQQPPQFYQPQQQQPQYQP. The interval 139-161 is disordered; that stretch reads YQQVPQQPPQFYQPQQQQPQYQP.

The protein belongs to the TM2 family.

Its subcellular location is the membrane. This is TM2 domain-containing protein DDB_G0278163 from Dictyostelium discoideum (Social amoeba).